The sequence spans 417 residues: UDP-N-acetylmuramoylalanine--D-glutamate ligase (417 aa).

104-110 (GSNGKST) lines the ATP pocket.

It belongs to the MurCDEF family.

The protein localises to the cytoplasm. It carries out the reaction UDP-N-acetyl-alpha-D-muramoyl-L-alanine + D-glutamate + ATP = UDP-N-acetyl-alpha-D-muramoyl-L-alanyl-D-glutamate + ADP + phosphate + H(+). Its pathway is cell wall biogenesis; peptidoglycan biosynthesis. Functionally, cell wall formation. Catalyzes the addition of glutamate to the nucleotide precursor UDP-N-acetylmuramoyl-L-alanine (UMA). This is UDP-N-acetylmuramoylalanine--D-glutamate ligase from Francisella tularensis subsp. novicida (strain U112).